Consider the following 194-residue polypeptide: RNA polymerase II subunit A C-terminal domain phosphatase SSU72 like protein 2 (194 aa).

It belongs to the SSU72 phosphatase family.

The protein localises to the nucleus. It carries out the reaction O-phospho-L-seryl-[protein] + H2O = L-seryl-[protein] + phosphate. It catalyses the reaction O-phospho-L-threonyl-[protein] + H2O = L-threonyl-[protein] + phosphate. In terms of biological role, protein phosphatase that catalyzes the dephosphorylation of the C-terminal domain of RNA polymerase II. Plays a role in RNA processing and termination. The sequence is that of RNA polymerase II subunit A C-terminal domain phosphatase SSU72 like protein 2 from Homo sapiens (Human).